Consider the following 814-residue polypeptide: Phenylalanine--tRNA ligase beta subunit (814 aa).

A tRNA-binding domain is found at 39–153; the sequence is SARAKGVVVG…ELPALGAPVA (115 aa). Residues 414-498 form the B5 domain; the sequence is ADASSVLLRR…RLVGFDRFGA (85 aa). Residues D476, D482, E485, and E486 each contribute to the Mg(2+) site. The 94-residue stretch at 720-813 folds into the FDX-ACB domain; sequence PTVPASERDL…LVKQHGAELR (94 aa).

The protein belongs to the phenylalanyl-tRNA synthetase beta subunit family. Type 1 subfamily. In terms of assembly, tetramer of two alpha and two beta subunits. The cofactor is Mg(2+).

The protein localises to the cytoplasm. The enzyme catalyses tRNA(Phe) + L-phenylalanine + ATP = L-phenylalanyl-tRNA(Phe) + AMP + diphosphate + H(+). The polypeptide is Phenylalanine--tRNA ligase beta subunit (Parasynechococcus marenigrum (strain WH8102)).